We begin with the raw amino-acid sequence, 180 residues long: Protein YOP1 (180 aa).

The Cytoplasmic portion of the chain corresponds to 1–35 (MADYLKLFQDSLKGLDTKFAGNQILSRIEAQTKLP). The helical transmembrane segment at 36-55 (RSYVIVGLVAVYFLLIFINV) threads the bilayer. The Lumenal segment spans residues 56–57 (GG). The chain crosses the membrane as a helical span at residues 58 to 78 (IGEILSNFVGFCIPTYYSLKA). Residues 79–88 (LKTATSTDDT) are Cytoplasmic-facing. Residues 89-105 (QLLTYWIVFSFLSVIEF) traverse the membrane as a helical segment. The Lumenal portion of the chain corresponds to 106 to 108 (WSK). A helical membrane pass occupies residues 109 to 127 (AILYWVPFYWFFKTVFLLY). At 128-180 (IAIPSFGGAQLVYTRLISPFSDKYLPIVEGKSGELAQKVEAAANNAKASGYSR) the chain is on the cytoplasmic side.

The protein belongs to the DP1 family. As to quaternary structure, oligomer.

The protein resides in the endoplasmic reticulum membrane. Its subcellular location is the golgi apparatus membrane. Functionally, required to generate and maintain the structure of the tubular endoplasmic reticulum network and the vacuole. Induces high curvature in membranes and causes membrane tubule formation. Involved in membrane/vesicle trafficking. The chain is Protein YOP1 (YOP1) from Kluyveromyces lactis (strain ATCC 8585 / CBS 2359 / DSM 70799 / NBRC 1267 / NRRL Y-1140 / WM37) (Yeast).